The chain runs to 312 residues: Ribosomal protein L11 methyltransferase (312 aa).

S-adenosyl-L-methionine is bound by residues threonine 162, glycine 183, aspartate 205, and asparagine 248.

It belongs to the methyltransferase superfamily. PrmA family.

It is found in the cytoplasm. The catalysed reaction is L-lysyl-[protein] + 3 S-adenosyl-L-methionine = N(6),N(6),N(6)-trimethyl-L-lysyl-[protein] + 3 S-adenosyl-L-homocysteine + 3 H(+). In terms of biological role, methylates ribosomal protein L11. This is Ribosomal protein L11 methyltransferase from Bacillus cereus (strain ATCC 10987 / NRS 248).